The sequence spans 123 residues: Small ribosomal subunit protein uS12 (123 aa).

It belongs to the universal ribosomal protein uS12 family. Part of the 30S ribosomal subunit. Contacts proteins S8 and S17. May interact with IF1 in the 30S initiation complex.

Its function is as follows. With S4 and S5 plays an important role in translational accuracy. In terms of biological role, interacts with and stabilizes bases of the 16S rRNA that are involved in tRNA selection in the A site and with the mRNA backbone. Located at the interface of the 30S and 50S subunits, it traverses the body of the 30S subunit contacting proteins on the other side and probably holding the rRNA structure together. The combined cluster of proteins S8, S12 and S17 appears to hold together the shoulder and platform of the 30S subunit. This Corynebacterium diphtheriae (strain ATCC 700971 / NCTC 13129 / Biotype gravis) protein is Small ribosomal subunit protein uS12.